Reading from the N-terminus, the 111-residue chain is Urease subunit beta (111 aa).

The protein belongs to the urease beta subunit family. In terms of assembly, heterotrimer of UreA (gamma), UreB (beta) and UreC (alpha) subunits. Three heterotrimers associate to form the active enzyme.

The protein resides in the cytoplasm. It carries out the reaction urea + 2 H2O + H(+) = hydrogencarbonate + 2 NH4(+). Its pathway is nitrogen metabolism; urea degradation; CO(2) and NH(3) from urea (urease route): step 1/1. This Geobacillus kaustophilus (strain HTA426) protein is Urease subunit beta.